Reading from the N-terminus, the 68-residue chain is Palustrin-1c (68 aa).

A signal peptide spans 1–22; that stretch reads MFTMKKSLLLLFFLGTISLSLC. Residues 23 to 39 constitute a propeptide that is removed on maturation; it reads EEERGADEEEGDGEKLT. C62 and C68 form a disulfide bridge.

Expressed by the skin glands.

It is found in the secreted. Functionally, antimicrobial peptide. The polypeptide is Palustrin-1c (Odorrana versabilis (Chinese bamboo leaf odorous frog)).